We begin with the raw amino-acid sequence, 163 residues long: uncharacterized protein (163 aa).

Disordered regions lie at residues 1–78 (MHSL…NPHS) and 115–163 (PKWL…LPCH).

This is an uncharacterized protein from Homo sapiens (Human).